A 364-amino-acid polypeptide reads, in one-letter code: Probable transcription factor At4g00390 (364 aa).

The segment at 1–149 (MTKKLDPPTA…STKRVKKDEE (149 aa)) is disordered. Acidic residues predominate over residues 13–32 (SDEDDVETSEDDSSSSEEDE). A compositionally biased stretch (low complexity) spans 39–80 (ATTAAAPAKSTAVSAATPAKSTSVSAAAPSKSTAVSAAADSD). Positions 81 to 93 (SGSESETDSDSES) are enriched in acidic residues.

This sequence belongs to the GeBP family.

This Arabidopsis thaliana (Mouse-ear cress) protein is Probable transcription factor At4g00390.